Consider the following 94-residue polypeptide: Small ribosomal subunit protein uS19 (94 aa).

Belongs to the universal ribosomal protein uS19 family.

In terms of biological role, protein S19 forms a complex with S13 that binds strongly to the 16S ribosomal RNA. This Desulforamulus reducens (strain ATCC BAA-1160 / DSM 100696 / MI-1) (Desulfotomaculum reducens) protein is Small ribosomal subunit protein uS19.